The following is a 126-amino-acid chain: Large ribosomal subunit protein bL17 (126 aa).

The protein belongs to the bacterial ribosomal protein bL17 family. In terms of assembly, part of the 50S ribosomal subunit. Contacts protein L32.

This Laribacter hongkongensis (strain HLHK9) protein is Large ribosomal subunit protein bL17.